The primary structure comprises 103 residues: Large ribosomal subunit protein bL21 (103 aa).

It belongs to the bacterial ribosomal protein bL21 family. In terms of assembly, part of the 50S ribosomal subunit. Contacts protein L20.

In terms of biological role, this protein binds to 23S rRNA in the presence of protein L20. The sequence is that of Large ribosomal subunit protein bL21 from Legionella pneumophila (strain Paris).